Here is a 498-residue protein sequence, read N- to C-terminus: Zinc finger protein 497 (498 aa).

The tract at residues 30–104 (SEGAVSGGWG…LRPSPLPEEP (75 aa)) is disordered. C2H2-type zinc fingers lie at residues 106–128 (CRCGECGKAFSQGSYLLQHRRVH), 134–156 (YTCPECGKAFAWSSNLSQHQRIH), 162–184 (YACRECGKAFRAHSQLIHHQETH), 190–212 (FRCPDCGKSFGRSTTLVQHRRTH), 218–240 (YECPECGKAFSWNSNFLEHRRVH), 246–268 (HACRDCGKAFSQSSNLAEHLKIH), 274–296 (HACPDCGKAFVRVAGLRQHRRTH), 302–324 (FPCAECGKAFRESSQLLQHQRTH), 330–352 (FECAECGQAFVMGSYLAEHRRVH), 358–380 (HACAQCGKAFSQRSNLLSHRRTH), 386–408 (FACADCGKAFRGSSGLAHHRLSH), 414–436 (FACAECGKAFRGSSELRQHQRLH), 442–464 (FVCAHCSKAFVRKSELLSHRRTH), and 470–492 (YACGECGKPFSHRCNLNEHQKRH).

It belongs to the krueppel C2H2-type zinc-finger protein family.

It localises to the nucleus. In terms of biological role, may be involved in transcriptional regulation. This chain is Zinc finger protein 497 (ZNF497), found in Homo sapiens (Human).